Consider the following 277-residue polypeptide: Exosome complex component Rrp42 (277 aa).

Belongs to the RNase PH family. Rrp42 subfamily. In terms of assembly, component of the archaeal exosome complex. Forms a hexameric ring-like arrangement composed of 3 Rrp41-Rrp42 heterodimers. The hexameric ring associates with a trimer of Rrp4 and/or Csl4 subunits.

It localises to the cytoplasm. In terms of biological role, non-catalytic component of the exosome, which is a complex involved in RNA degradation. Contributes to the structuring of the Rrp41 active site. The sequence is that of Exosome complex component Rrp42 from Pyrococcus furiosus (strain ATCC 43587 / DSM 3638 / JCM 8422 / Vc1).